The sequence spans 447 residues: DNA primase DnaG (447 aa).

The Toprim domain occupies 200-274 (DSIIVVEGRA…DIDYVARAPE (75 aa)). Residues Glu206, Asp248, and Asp250 each contribute to the Mg(2+) site.

It belongs to the archaeal DnaG primase family. As to quaternary structure, forms a ternary complex with MCM helicase and DNA. Component of the archaeal exosome complex. It depends on Mg(2+) as a cofactor.

It carries out the reaction ssDNA + n NTP = ssDNA/pppN(pN)n-1 hybrid + (n-1) diphosphate.. Functionally, RNA polymerase that catalyzes the synthesis of short RNA molecules used as primers for DNA polymerase during DNA replication. Also part of the exosome, which is a complex involved in RNA degradation. Acts as a poly(A)-binding protein that enhances the interaction between heteromeric, adenine-rich transcripts and the exosome. In Pyrococcus abyssi (strain GE5 / Orsay), this protein is DNA primase DnaG.